A 134-amino-acid chain; its full sequence is Small ribosomal subunit protein uS8c (134 aa).

It belongs to the universal ribosomal protein uS8 family. As to quaternary structure, part of the 30S ribosomal subunit.

The protein resides in the plastid. Its subcellular location is the chloroplast. Its function is as follows. One of the primary rRNA binding proteins, it binds directly to 16S rRNA central domain where it helps coordinate assembly of the platform of the 30S subunit. In Helianthus annuus (Common sunflower), this protein is Small ribosomal subunit protein uS8c (rps8).